A 130-amino-acid polypeptide reads, in one-letter code: S-adenosylmethionine decarboxylase proenzyme (130 aa).

Catalysis depends on serine 66, which acts as the Schiff-base intermediate with substrate; via pyruvic acid. At serine 66 the chain carries Pyruvic acid (Ser); by autocatalysis. Histidine 71 serves as the catalytic Proton acceptor; for processing activity. The active-site Proton donor; for catalytic activity is the cysteine 86.

This sequence belongs to the prokaryotic AdoMetDC family. Type 1 subfamily. In terms of assembly, heterotetramer of two alpha and two beta chains arranged as a dimer of alpha/beta heterodimers. Pyruvate is required as a cofactor. Post-translationally, is synthesized initially as an inactive proenzyme. Formation of the active enzyme involves a self-maturation process in which the active site pyruvoyl group is generated from an internal serine residue via an autocatalytic post-translational modification. Two non-identical subunits are generated from the proenzyme in this reaction, and the pyruvate is formed at the N-terminus of the alpha chain, which is derived from the carboxyl end of the proenzyme. The post-translation cleavage follows an unusual pathway, termed non-hydrolytic serinolysis, in which the side chain hydroxyl group of the serine supplies its oxygen atom to form the C-terminus of the beta chain, while the remainder of the serine residue undergoes an oxidative deamination to produce ammonia and the pyruvoyl group blocking the N-terminus of the alpha chain.

The catalysed reaction is S-adenosyl-L-methionine + H(+) = S-adenosyl 3-(methylsulfanyl)propylamine + CO2. It functions in the pathway amine and polyamine biosynthesis; S-adenosylmethioninamine biosynthesis; S-adenosylmethioninamine from S-adenosyl-L-methionine: step 1/1. Functionally, catalyzes the decarboxylation of S-adenosylmethionine to S-adenosylmethioninamine (dcAdoMet), the propylamine donor required for the synthesis of the polyamines spermine and spermidine from the diamine putrescine. The chain is S-adenosylmethionine decarboxylase proenzyme from Bacillus cytotoxicus (strain DSM 22905 / CIP 110041 / 391-98 / NVH 391-98).